Here is a 291-residue protein sequence, read N- to C-terminus: POU class 2 homeobox associating-factor 2 (291 aa).

In terms of domain architecture, OCA spans 7–29 (KRVYQGVRVKHTVKDLLAEKRLR). Residues 176 to 219 (AAPVADSPSLAGPDSGSSSPYRLTSGRSGSSIPSSSQPYTLQPL) form a disordered region. Over residues 200–211 (SGRSGSSIPSSS) the composition is skewed to low complexity.

It belongs to the POU2AF family.

Its function is as follows. Transcriptional coactivator that may regulate cell type-specific differentiation pathways. The sequence is that of POU class 2 homeobox associating-factor 2 (pou2af2) from Danio rerio (Zebrafish).